Reading from the N-terminus, the 807-residue chain is Glycerol-3-phosphate acyltransferase (807 aa).

Positions 305–310 match the HXXXXD motif motif; it reads CHRSHM.

Belongs to the GPAT/DAPAT family.

The protein resides in the cell inner membrane. The enzyme catalyses sn-glycerol 3-phosphate + an acyl-CoA = a 1-acyl-sn-glycero-3-phosphate + CoA. Its pathway is phospholipid metabolism; CDP-diacylglycerol biosynthesis; CDP-diacylglycerol from sn-glycerol 3-phosphate: step 1/3. In Shigella boydii serotype 18 (strain CDC 3083-94 / BS512), this protein is Glycerol-3-phosphate acyltransferase.